We begin with the raw amino-acid sequence, 599 residues long: MKKSLLCSTLALAVASAAQAAPKTVDIMVLYTPAATQTANGRDIDARIASYIEFANTAYEKSGVNLRLRLVHKQRLDWADYPTVTGANLDRFMRDPQVQRLREQYGADLVSLVNRSQNSGNGYITCGIGYMGSGDKNSGRFHGNAKDIAYNLTGVDCGLNTFAHEAGHNMGLRHSYEQDLESSYYDPRYAHSGTYEWSRGYGVQGRFATVMAYPHAFGTNKQAPFFANPRLVNAECANQPCGREEHADAVRALNSMATQIADFRPTKVPGTVNPGSGGDTPTPPDLPWCTKAKLGGLLGDGEFASMEGWRAWSGNAQLSLVNVAKGCRDNALLVDVRGFDLLVRPIAPLRAGSGYRLSGKVMLKAANTRETVRMALLSERADGALAYNPAQSVELSVSGNEFSRLEKTFDYRPAADQRNLYVAVWSDSGASLLVDEMNLQEAQAAPPSVPPAPKRIAYDFESGIGGWSGVHASARATRVASAGRLALEAYQRRYAGTGASTSLLGNLEAGRTYAFSADVRVGDGRGSQAMTYAYLYLESQGRPGEYLPLGYKVVENGRWASLRGQVQLPKGPIKRAELMILSGNQQESMFIDNVQLLQK.

A signal peptide spans 1 to 20 (MKKSLLCSTLALAVASAAQA). His-164 lines the Zn(2+) pocket. Glu-165 is an active-site residue. Zn(2+) is bound by residues His-168 and His-174. Positions 265–285 (PTKVPGTVNPGSGGDTPTPPD) are disordered. The 126-residue stretch at 458-583 (YDFESGIGGW…KRAELMILSG (126 aa)) folds into the CBM-cenC domain.

This sequence belongs to the peptidase M72 family. As to quaternary structure, interacts with BamI, the product of its coregulated adjacent gene, which inhibits its protease activity. Zn(2+) serves as cofactor. In terms of processing, made as a membrane-associated pre-pro-protein, which is exported to the periplasm with removal of the signal peptide, leading to a protein with a molecular mass of 65 kDa, that likely contains the metzincin domain plus tandem carbohydrate-binding domains. Undergoes processing during export to the extracellular milieu, probably by autocatalysis, yielding a (mature length) 25 kDa protein that most likely corresponds to the metzincin domain only.

It is found in the secreted. It carries out the reaction Cleavage of Xaa-|-Asp, Xaa-|-Glu and Xaa-|-cysteic acid bonds.. Is inhibited by BamI, the product of its coregulated adjacent gene. Functionally, metalloprotease with endopeptidase activity. Specifically cleaves on the N-terminal side of aspartyl, glutamyl and cysteic acid residues. Mep72 appears to be a secreted biofilm-specific regulator that affects the processing of a very specific subset of virulence factors exported by the type III secretion machinery as well as flagellar proteins. Binds directly to ExoS and PcrV and affects the processing of these proteins in the biofilm secretome, but contrary to expectation, Mep72 seems to protect these targets against proteolytic processing/degradation. The polypeptide is Peptidyl-Asp metalloendopeptidase (Pseudomonas aeruginosa (strain ATCC 15692 / DSM 22644 / CIP 104116 / JCM 14847 / LMG 12228 / 1C / PRS 101 / PAO1)).